The chain runs to 470 residues: 5-hydroxytryptamine receptor 2A (470 aa).

The Extracellular portion of the chain corresponds to 1–80 (MDVLCEENTS…LQEKNWSALL (80 aa)). N-linked (GlcNAc...) asparagine glycosylation is found at asparagine 8, asparagine 38, asparagine 44, asparagine 51, asparagine 54, and asparagine 75. The helical transmembrane segment at 81–97 (TAVVIILTIAGNILVIM) threads the bilayer. Over 98–111 (AVSLEKKLQNATNY) the chain is Cytoplasmic. A helical transmembrane segment spans residues 112–137 (FLMSLAIADMLLGFLVMPVSMLTILY). The Extracellular segment spans residues 138-146 (GYRWPLPSK). Residues 147 to 171 (LCAVWIYLDVLFSTASIMHLCAISL) form a helical membrane-spanning segment. An intrachain disulfide couples cysteine 148 to cysteine 227. Aspartate 155 is a binding site for serotonin. The DRY motif; important for ligand-induced conformation changes signature appears at 172-174 (DRY). Over 172 to 191 (DRYVAIQNPIHHRRFNSRTK) the chain is Cytoplasmic. The chain crosses the membrane as a helical span at residues 192–215 (AFLKIIAVWTISVGISMPIPVFGL). Residues 216–232 (QDDSKVFKEGSCLLADD) are Extracellular-facing. The chain crosses the membrane as a helical span at residues 233 to 258 (NFVLIGSFVSFFIPLTIMVITYFLTI). The Cytoplasmic segment spans residues 259-321 (KSLQKEATLC…QSISNEQKAC (63 aa)). A Phosphoserine modification is found at serine 280. Residues 322–347 (KVLGIVFFLFVVMWCPFFITNIMAVI) form a helical membrane-spanning segment. A serotonin-binding site is contributed by asparagine 342. A disulfide bond links cysteine 348 and cysteine 352. The Extracellular segment spans residues 348–355 (CKESCNED). A helical membrane pass occupies residues 356–381 (VIGALLNVFVWIGYLSSAVNPLVYTL). An NPxxY motif; important for ligand-induced conformation changes and signaling motif is present at residues 375–379 (NPLVY). The Cytoplasmic portion of the chain corresponds to 382 to 470 (FNKTYRSAFS…NTVNEKVSCV (89 aa)). The segment at 448–470 (GKQHSEDAPADNSNTVNEKVSCV) is disordered. The segment covering 458 to 470 (DNSNTVNEKVSCV) has biased composition (polar residues). The PDZ-binding motif lies at 468–470 (SCV).

It belongs to the G-protein coupled receptor 1 family. As to quaternary structure, interacts (via C-terminus) with MPDZ and PATJ. May interact (via C-terminus) with MPP3, PRDX6, DLG4, DLG1, CASK, APBA1 and MAGI2. Interacts with GRM2 and DRD2; this may affect signaling.

Its subcellular location is the cell membrane. The protein resides in the cell projection. It localises to the dendrite. The protein localises to the axon. It is found in the cytoplasmic vesicle. Its subcellular location is the membrane. The protein resides in the caveola. It localises to the presynapse. With respect to regulation, G-protein coupled receptor activity is regulated by lipids: oleamide increases HTR2A-mediated activity. In terms of biological role, G-protein coupled receptor for 5-hydroxytryptamine (serotonin). Also functions as a receptor for various drugs and psychoactive substances, including mescaline, psilocybin, 1-(2,5-dimethoxy-4-iodophenyl)-2-aminopropane (DOI) and lysergic acid diethylamide (LSD). Ligand binding causes a conformation change that triggers signaling via guanine nucleotide-binding proteins (G proteins) and modulates the activity of downstream effectors. HTR2A is coupled to G(q)/G(11) G alpha proteins and activates phospholipase C-beta, releasing diacylglycerol (DAG) and inositol 1,4,5-trisphosphate (IP3) second messengers that modulate the activity of phosphatidylinositol 3-kinase and promote the release of Ca(2+) ions from intracellular stores, respectively. Beta-arrestin family members inhibit signaling via G proteins and mediate activation of alternative signaling pathways. Affects neural activity, perception, cognition and mood. Plays a role in the regulation of behavior, including responses to anxiogenic situations and psychoactive substances. Plays a role in intestinal smooth muscle contraction, and may play a role in arterial vasoconstriction. The protein is 5-hydroxytryptamine receptor 2A (HTR2A) of Sus scrofa (Pig).